The primary structure comprises 717 residues: DNA-binding protein RFX2 (717 aa).

The segment at 1-28 is disordered; the sequence is MQNSEGGADSPASVALRPAAQPMPASPQ. Residue Ser26 is modified to Phosphoserine. Residues 194-269 constitute a DNA-binding region (RFX-type winged-helix); that stretch reads HLQWLLDNYE…YHYYGIRLKP (76 aa). Positions 286–318 are disordered; it reads RQQPTHQKPRYRPAQKSDSLGDGSAHSNMHGMP. Ser411 is modified (phosphoserine). Over residues 685–710 the composition is skewed to basic and acidic residues; sequence DGHSSEADVDGRSLGEPLVKRERSDP. The segment at 685-717 is disordered; it reads DGHSSEADVDGRSLGEPLVKRERSDPSHPLQGI.

This sequence belongs to the RFX family. In terms of assembly, homodimer; probably only forms homodimers in testis. Heterodimer; heterodimerizes with RFX1 and RFX3.

It localises to the nucleus. Its subcellular location is the cytoplasm. Its function is as follows. Transcription factor that acts as a key regulator of spermatogenesis. Acts by regulating expression of genes required for the haploid phase during spermiogenesis, such as genes required for cilium assembly and function. Recognizes and binds the X-box, a regulatory motif with DNA sequence 5'-GTNRCC(0-3N)RGYAAC-3' present on promoters. Probably activates transcription of the testis-specific histone gene H1-6. In Mus musculus (Mouse), this protein is DNA-binding protein RFX2 (Rfx2).